Reading from the N-terminus, the 515-residue chain is Galactose/methyl galactoside import ATP-binding protein MglA (515 aa).

ABC transporter domains follow at residues 8 to 243 (LEMR…VGRE) and 254 to 499 (IPKE…AKYL). Residue 40 to 47 (GENGAGKS) coordinates ATP.

Belongs to the ABC transporter superfamily. Galactose/methyl galactoside importer (TC 3.A.1.2.3) family. The complex is composed of one ATP-binding protein (MglA), two transmembrane proteins (MglC) and a solute-binding protein (MglB).

The protein localises to the cell membrane. It carries out the reaction D-galactose(out) + ATP + H2O = D-galactose(in) + ADP + phosphate + H(+). The catalysed reaction is methyl beta-D-galactoside(out) + ATP + H2O = methyl beta-D-galactoside(in) + ADP + phosphate + H(+). In terms of biological role, part of the ABC transporter complex MglABC involved in galactose/methyl galactoside import. Responsible for energy coupling to the transport system. This is Galactose/methyl galactoside import ATP-binding protein MglA from Clostridium perfringens (strain SM101 / Type A).